The primary structure comprises 280 residues: Bifunctional protein FolD (280 aa).

NADP(+) contacts are provided by residues 166–168 and Ser191; that span reads GRS.

Belongs to the tetrahydrofolate dehydrogenase/cyclohydrolase family. Homodimer.

It carries out the reaction (6R)-5,10-methylene-5,6,7,8-tetrahydrofolate + NADP(+) = (6R)-5,10-methenyltetrahydrofolate + NADPH. The enzyme catalyses (6R)-5,10-methenyltetrahydrofolate + H2O = (6R)-10-formyltetrahydrofolate + H(+). It participates in one-carbon metabolism; tetrahydrofolate interconversion. In terms of biological role, catalyzes the oxidation of 5,10-methylenetetrahydrofolate to 5,10-methenyltetrahydrofolate and then the hydrolysis of 5,10-methenyltetrahydrofolate to 10-formyltetrahydrofolate. The chain is Bifunctional protein FolD from Cellvibrio japonicus (strain Ueda107) (Pseudomonas fluorescens subsp. cellulosa).